A 253-amino-acid chain; its full sequence is Indole-3-glycerol phosphate synthase (253 aa).

This sequence belongs to the TrpC family.

It carries out the reaction 1-(2-carboxyphenylamino)-1-deoxy-D-ribulose 5-phosphate + H(+) = (1S,2R)-1-C-(indol-3-yl)glycerol 3-phosphate + CO2 + H2O. It functions in the pathway amino-acid biosynthesis; L-tryptophan biosynthesis; L-tryptophan from chorismate: step 4/5. The chain is Indole-3-glycerol phosphate synthase from Bacillus cereus (strain AH187).